A 766-amino-acid chain; its full sequence is EMILIN-3 (766 aa).

The signal sequence occupies residues Met1–Ala22. The EMI domain occupies His55–Glu131. Cystine bridges form between Cys59-Cys121, Cys86-Cys92, and Cys120-Cys129. The N-linked (GlcNAc...) asparagine glycan is linked to Asn66. Residues His132–Phe179 form a disordered region. N-linked (GlcNAc...) asparagine glycosylation is present at Asn443. Positions Gly467–Asp491 form a coiled coil. Residues Asn562, Asn616, and Asn732 are each glycosylated (N-linked (GlcNAc...) asparagine). 2 coiled-coil regions span residues Ala615 to Ala663 and Ser726 to Arg761.

It localises to the secreted. Its subcellular location is the extracellular space. It is found in the extracellular matrix. This chain is EMILIN-3 (EMILIN3), found in Homo sapiens (Human).